The chain runs to 150 residues: UPF0178 protein Sbal223_2514 (150 aa).

Belongs to the UPF0178 family.

The protein is UPF0178 protein Sbal223_2514 of Shewanella baltica (strain OS223).